A 1085-amino-acid polypeptide reads, in one-letter code: Aminopeptidase N (1085 aa).

Residues 1 to 30 constitute a signal peptide (required for ER targeting and membrane association; not cleaved); it reads MKLTKGCAYKYIIFTVLILANILYDNKKRC. The segment at 1–200 is sufficient for targeting to the food vacuole; that stretch reads MKLTKGCAYK…VKKNEPKIHY (200 aa). Residues 108 to 130 form a disordered region; that stretch reads EKGDNNNNNHQNNNGNDNKKRLG. Low complexity predominate over residues 112–123; that stretch reads NNNNNHQNNNGN. A peptide-binding residues include Glu319, Gly460, Ala461, and Glu463. Residue His496 coordinates Zn(2+). The Proton acceptor role is filled by Glu497. Residues His500 and Glu519 each contribute to the Zn(2+) site.

It belongs to the peptidase M1 family. Heterodimer of the p68 form and the p35 form which are derived from the p120 precursor. The cofactor is Zn(2+). In terms of processing, the full length protein appears to be cleaved into a 120 kDa precursor. This precursor is then proteolytically cleaved at the N-terminus generating a 96 kDa form which is further processed at the C-terminus into 68 kDa and 35 kDa forms that remain associated.

Its subcellular location is the parasitophorous vacuole membrane. It localises to the nucleus. The protein localises to the cytoplasm. It is found in the vacuole lumen. With respect to regulation, inhibited by 1,10-phenanthroline, EDTA and bestatin. Inhibited by (Benzyl)Tyr-Ala (BTA). Activity is not affected by phosphoramidin, PMSF, leupeptin, iodoacetamide or pepstatin. Its function is as follows. Displays aminopeptidase activity with a broad substrate specificity. Preferentially, cleaves after Leu and Met, but also cleaves after Ala and Arg. Low activity towards Lys, Phe, Tyr, Trp, Gln, Ser and Gly and negligible activity towards Glu, Asp, Pro, Ile, Thr, Val, His and Asn. Has dipeptidase activity. Plays a role in the terminal stages of host hemoglobin digestion by cleaving the N-terminal residue of small hemoglobin-derived oligopeptides. This is Aminopeptidase N from Plasmodium falciparum (isolate 3D7).